The chain runs to 202 residues: Holliday junction branch migration complex subunit RuvA (202 aa).

The tract at residues 1 to 64 is domain I; it reads MIGRLRGTLA…EDAQLLYGFA (64 aa). Residues 65–143 are domain II; that stretch reads SKRERDFFRE…AWEAVPSMFA (79 aa). The interval 144–154 is flexible linker; it reads LVPNQPDAPAP. Positions 154–202 are domain III; it reads PVASAESDAVSALISLGYKPQEASKAVSAIKDKGLSSEDMIRRALKGMI.

Belongs to the RuvA family. As to quaternary structure, homotetramer. Forms an RuvA(8)-RuvB(12)-Holliday junction (HJ) complex. HJ DNA is sandwiched between 2 RuvA tetramers; dsDNA enters through RuvA and exits via RuvB. An RuvB hexamer assembles on each DNA strand where it exits the tetramer. Each RuvB hexamer is contacted by two RuvA subunits (via domain III) on 2 adjacent RuvB subunits; this complex drives branch migration. In the full resolvosome a probable DNA-RuvA(4)-RuvB(12)-RuvC(2) complex forms which resolves the HJ.

It is found in the cytoplasm. In terms of biological role, the RuvA-RuvB-RuvC complex processes Holliday junction (HJ) DNA during genetic recombination and DNA repair, while the RuvA-RuvB complex plays an important role in the rescue of blocked DNA replication forks via replication fork reversal (RFR). RuvA specifically binds to HJ cruciform DNA, conferring on it an open structure. The RuvB hexamer acts as an ATP-dependent pump, pulling dsDNA into and through the RuvAB complex. HJ branch migration allows RuvC to scan DNA until it finds its consensus sequence, where it cleaves and resolves the cruciform DNA. The protein is Holliday junction branch migration complex subunit RuvA of Pseudomonas fluorescens (strain ATCC BAA-477 / NRRL B-23932 / Pf-5).